We begin with the raw amino-acid sequence, 618 residues long: Crinkler effector protein 16 (618 aa).

A signal peptide spans 1–19; that stretch reads MVVVSLQCAIVGQAGSSFD. The segment at 18 to 57 is LQLFLAK domain; it reads FDVEIDDGAKVSKLKDAIKAKKPNDFKVVDADKLHLFLAK. The interval 58-139 is DWL domain; it reads QPVEDESGKE…NMELPSSEQI (82 aa). An HVLVXXP motif motif is present at residues 140 to 146; sequence HVLVVVP. The N-linked (GlcNAc...) asparagine glycan is linked to Asn-534.

The protein belongs to the Crinkler effector family.

The protein localises to the secreted. Its subcellular location is the host nucleus. In terms of biological role, secreted effector that elicits necrosis in host plants, a characteristic of plant innate immunity. This chain is Crinkler effector protein 16, found in Phytophthora infestans (Potato late blight agent).